The following is a 399-amino-acid chain: Coenzyme A biosynthesis bifunctional protein CoaBC (399 aa).

The segment at 1 to 190 (MQSLAGKKIL…FAPKILVGKR (190 aa)) is phosphopantothenoylcysteine decarboxylase. Cys-159 (proton donor) is an active-site residue. The segment at 191–399 (VLITAGPTRE…AVMHLIHEQM (209 aa)) is phosphopantothenate--cysteine ligase. Residues Asp-279, Lys-289, 307-310 (PDIV), Phe-326, Lys-340, and Lys-344 each bind CTP.

In the N-terminal section; belongs to the HFCD (homo-oligomeric flavin containing Cys decarboxylase) superfamily. It in the C-terminal section; belongs to the PPC synthetase family. The cofactor is Mg(2+). It depends on FMN as a cofactor.

The enzyme catalyses N-[(R)-4-phosphopantothenoyl]-L-cysteine + H(+) = (R)-4'-phosphopantetheine + CO2. It catalyses the reaction (R)-4'-phosphopantothenate + L-cysteine + CTP = N-[(R)-4-phosphopantothenoyl]-L-cysteine + CMP + diphosphate + H(+). It participates in cofactor biosynthesis; coenzyme A biosynthesis; CoA from (R)-pantothenate: step 2/5. The protein operates within cofactor biosynthesis; coenzyme A biosynthesis; CoA from (R)-pantothenate: step 3/5. Its function is as follows. Catalyzes two sequential steps in the biosynthesis of coenzyme A. In the first step cysteine is conjugated to 4'-phosphopantothenate to form 4-phosphopantothenoylcysteine. In the second step the latter compound is decarboxylated to form 4'-phosphopantotheine. This chain is Coenzyme A biosynthesis bifunctional protein CoaBC, found in Vibrio cholerae serotype O1 (strain ATCC 39315 / El Tor Inaba N16961).